A 385-amino-acid chain; its full sequence is tRNA-specific 2-thiouridylase MnmA (385 aa).

ATP contacts are provided by residues 18 to 25 and Leu44; that span reads AMSGGVDS. Catalysis depends on Cys112, which acts as the Nucleophile. Cys112 and Cys209 are joined by a disulfide. Gly136 serves as a coordination point for ATP. The interaction with tRNA stretch occupies residues 159-161; it reads RDQ. The active-site Cysteine persulfide intermediate is the Cys209.

This sequence belongs to the MnmA/TRMU family.

The protein resides in the cytoplasm. It catalyses the reaction S-sulfanyl-L-cysteinyl-[protein] + uridine(34) in tRNA + AH2 + ATP = 2-thiouridine(34) in tRNA + L-cysteinyl-[protein] + A + AMP + diphosphate + H(+). Functionally, catalyzes the 2-thiolation of uridine at the wobble position (U34) of tRNA, leading to the formation of s(2)U34. This Methylorubrum populi (strain ATCC BAA-705 / NCIMB 13946 / BJ001) (Methylobacterium populi) protein is tRNA-specific 2-thiouridylase MnmA.